A 102-amino-acid chain; its full sequence is Co-chaperonin GroES (102 aa).

It belongs to the GroES chaperonin family. As to quaternary structure, heptamer of 7 subunits arranged in a ring. Interacts with the chaperonin GroEL.

Its subcellular location is the cytoplasm. Its function is as follows. Together with the chaperonin GroEL, plays an essential role in assisting protein folding. The GroEL-GroES system forms a nano-cage that allows encapsulation of the non-native substrate proteins and provides a physical environment optimized to promote and accelerate protein folding. GroES binds to the apical surface of the GroEL ring, thereby capping the opening of the GroEL channel. The protein is Co-chaperonin GroES of Chlamydia caviae (strain ATCC VR-813 / DSM 19441 / 03DC25 / GPIC) (Chlamydophila caviae).